The chain runs to 308 residues: Ribosomal RNA small subunit methyltransferase H (308 aa).

S-adenosyl-L-methionine is bound by residues 38–40, aspartate 58, phenylalanine 82, aspartate 99, and glutamine 106; that span reads GGH.

Belongs to the methyltransferase superfamily. RsmH family.

Its subcellular location is the cytoplasm. The catalysed reaction is cytidine(1402) in 16S rRNA + S-adenosyl-L-methionine = N(4)-methylcytidine(1402) in 16S rRNA + S-adenosyl-L-homocysteine + H(+). In terms of biological role, specifically methylates the N4 position of cytidine in position 1402 (C1402) of 16S rRNA. This chain is Ribosomal RNA small subunit methyltransferase H, found in Acidovorax ebreus (strain TPSY) (Diaphorobacter sp. (strain TPSY)).